We begin with the raw amino-acid sequence, 183 residues long: Calmodulin-like protein 3 (183 aa).

EF-hand domains follow at residues Glu7–Ser42, Pro43–Asp78, Gly80–Pro115, and Leu116–Gln151. Residues Asp20, Asp22, Asp24, Thr26, Glu31, Asp56, Asp58, Ser60, Ser62, Glu67, Asp93, Asp95, Asn97, Glu104, Asp129, Asp131, Asp133, Gln135, and Glu140 each coordinate Ca(2+). Positions Met154–Leu183 are disordered. Residues Cys173 and Cys174 are each lipidated (S-palmitoyl cysteine). Cys180 is modified (cysteine methyl ester). A lipid anchor (S-farnesyl cysteine) is attached at Cys180. Positions Thr181–Leu183 are cleaved as a propeptide — removed in mature form.

This sequence belongs to the calmodulin family.

The protein localises to the membrane. In terms of biological role, potential calcium sensor. This is Calmodulin-like protein 3 (CML3) from Oryza sativa subsp. japonica (Rice).